The primary structure comprises 135 residues: Large ribosomal subunit protein eL32 (135 aa).

Belongs to the eukaryotic ribosomal protein eL32 family. As to quaternary structure, component of the large ribosomal subunit.

The protein resides in the cytoplasm. In terms of biological role, component of the large ribosomal subunit. The ribosome is a large ribonucleoprotein complex responsible for the synthesis of proteins in the cell. This chain is Large ribosomal subunit protein eL32 (rpl32), found in Ictalurus punctatus (Channel catfish).